We begin with the raw amino-acid sequence, 153 residues long: MASDAASLLVLQLVLQPTLVTGITIQTAIKNFRILHVDYPMVNYPKGFHGYCNGLMAYVRGKLQDWYCPKIHYVVHAPFESIQKFCKYSESFCEDYNEYCTLTQNSFPITVCTLDHKQAPTSCSYNSTLTNQRLYLLCSRKHDAEPIGVIGLY.

A signal peptide spans 1–22; sequence MASDAASLLVLQLVLQPTLVTG.

It belongs to the pancreatic ribonuclease family.

It is found in the secreted. Does not exhibit any ribonuclease activity. The protein is Probable inactive ribonuclease-like protein 13 (Rnase13) of Rattus norvegicus (Rat).